A 459-amino-acid polypeptide reads, in one-letter code: Nucleobindin-1 (459 aa).

Residues 1–25 (MPTSVPRGAPFLLLPPLLMLSAVLA) form the signal peptide. Ser-85 carries the post-translational modification Phosphoserine. Thr-147 carries the phosphothreonine modification. Positions 149–217 (EARDLELLIQ…QQRRHREHPK (69 aa)) form a coiled coil. A DNA-binding region spans residues 171-217 (HHEEFKRYEMLKEHERRRYLESLGEEQRKEAERKLQEQQRRHREHPK). Residues 192-209 (SLGEEQRKEAERKLQEQQ) are compositionally biased toward basic and acidic residues. The tract at residues 192–220 (SLGEEQRKEAERKLQEQQRRHREHPKVNV) is disordered. The interval 227–320 (LKEVWEELDG…VTLEEFLAST (94 aa)) is binds to GNAI2 and GNAI3. 2 consecutive EF-hand domains span residues 239-274 (PNRF…ELEK) and 291-326 (ERLR…KEFG). Ca(2+) is bound by residues Asp-252, Asn-254, Asp-256, Glu-263, Asp-304, Asn-306, Asp-308, and Glu-315. Positions 302-332 (NVDTNQDRLVTLEEFLASTQRKEFGETAEGW) match the GBA motif. Residues 340–407 (AYTEEELKRF…RKQQQQEQSA (68 aa)) adopt a coiled-coil conformation. Ser-368 is subject to Phosphoserine. Residues 393–459 (LQMEQRKQQQ…VLPQLDSQHL (67 aa)) form a disordered region. Over residues 433-445 (DQKDVPASEKKVP) the composition is skewed to basic and acidic residues. Ser-456 carries the post-translational modification Phosphoserine.

This sequence belongs to the nucleobindin family. As to quaternary structure, interacts (via GBA motif) with guanine nucleotide-binding protein G(i) alpha subunits GNAI1, GNAI2 and GNAI3 with higher affinity for GNAI1 and GNAI3 than for GNAI2. Preferentially interacts with inactive rather than active GNAI3. Interaction with GNAI3 is inhibited when NUCB1 binds calcium, probably due to a conformational change which renders the GBA motif inaccessible. Minor constituent of the mineralized matrix of bone. Detected in calvaria, rib cartilage, liver, kidney, spleen, brain, lung, skeletal and heart muscle with highest expression in calvaria and approximately half the amount in kidney, liver and brain.

It is found in the golgi apparatus. Its subcellular location is the cis-Golgi network membrane. It localises to the cytoplasm. The protein resides in the secreted. Major calcium-binding protein of the Golgi which may have a role in calcium homeostasis. Acts as a non-receptor guanine nucleotide exchange factor which binds to and activates alpha subunits of guanine nucleotide-binding proteins (G proteins). This is Nucleobindin-1 (Nucb1) from Rattus norvegicus (Rat).